Here is a 398-residue protein sequence, read N- to C-terminus: Dual specificity mitogen-activated protein kinase kinase 2 (398 aa).

The segment at 1 to 29 (MPAKRKPVLPALTITPSPAEGPGPGGSAE) is disordered. In terms of domain architecture, Protein kinase spans 70 to 367 (FERISELGAG…LKMLMNHTFI (298 aa)). ATP is bound by residues 76–84 (LGAGNGGVV) and lysine 99. Aspartate 192 (proton acceptor) is an active-site residue. Serine 220 and serine 224 each carry phosphoserine; by RAF.

This sequence belongs to the protein kinase superfamily. STE Ser/Thr protein kinase family. MAP kinase kinase subfamily. Activated by phosphorylation on Ser/Thr catalyzed by MAP kinase kinase kinases (RAF).

It catalyses the reaction L-seryl-[protein] + ATP = O-phospho-L-seryl-[protein] + ADP + H(+). It carries out the reaction L-threonyl-[protein] + ATP = O-phospho-L-threonyl-[protein] + ADP + H(+). The catalysed reaction is L-tyrosyl-[protein] + ATP = O-phospho-L-tyrosyl-[protein] + ADP + H(+). In terms of biological role, catalyzes the concomitant phosphorylation of a threonine and a tyrosine residue in a Thr-Glu-Tyr sequence located in MAP kinases. Activates the ERK1 and ERK2 MAP kinases. In Gallus gallus (Chicken), this protein is Dual specificity mitogen-activated protein kinase kinase 2 (MAP2K2).